The primary structure comprises 239 residues: Lactate utilization protein A (239 aa).

This sequence belongs to the LutA/YkgE family.

Its function is as follows. Is involved in L-lactate degradation and allows cells to grow with lactate as the sole carbon source. This is Lactate utilization protein A from Bacillus cereus (strain B4264).